Reading from the N-terminus, the 161-residue chain is Phosphopantetheine adenylyltransferase (161 aa).

Threonine 9 contacts substrate. ATP-binding positions include 9–10 and histidine 17; that span reads TF. Substrate is bound by residues lysine 41, leucine 73, and arginine 87. ATP contacts are provided by residues 88-90, glutamate 98, and 123-129; these read GLR and YQFISGT.

Belongs to the bacterial CoaD family. In terms of assembly, homohexamer. Mg(2+) serves as cofactor.

It is found in the cytoplasm. The enzyme catalyses (R)-4'-phosphopantetheine + ATP + H(+) = 3'-dephospho-CoA + diphosphate. Its pathway is cofactor biosynthesis; coenzyme A biosynthesis; CoA from (R)-pantothenate: step 4/5. In terms of biological role, reversibly transfers an adenylyl group from ATP to 4'-phosphopantetheine, yielding dephospho-CoA (dPCoA) and pyrophosphate. This Cupriavidus taiwanensis (strain DSM 17343 / BCRC 17206 / CCUG 44338 / CIP 107171 / LMG 19424 / R1) (Ralstonia taiwanensis (strain LMG 19424)) protein is Phosphopantetheine adenylyltransferase.